The sequence spans 217 residues: Large ribosomal subunit protein uL3 (217 aa).

The protein belongs to the universal ribosomal protein uL3 family. Part of the 50S ribosomal subunit. Forms a cluster with proteins L14 and L19.

Functionally, one of the primary rRNA binding proteins, it binds directly near the 3'-end of the 23S rRNA, where it nucleates assembly of the 50S subunit. The chain is Large ribosomal subunit protein uL3 from Mycobacterium bovis (strain ATCC BAA-935 / AF2122/97).